Consider the following 345-residue polypeptide: MGSSEDQAYRLLNDYANGFMVSQVLFAACELGVFDLLAEAPGPLDVAAVAAGVRASAHGTELLLDICVSLKLLKVETRGGKAFYRNTELSSDYLTTVSPTSQCSMLKYMGRTSYRCWGHLADAVREGRNQYLETFGVPAEELFTAIYRSEGERLQFMQALQEVWSVNGRSVLTAFDLSVFPLMCDLGGGAGALAKECMSLYPGCKITVFDIPEVVWTAKQHFSFQEEEQIDFQEGDFFKDPLPEADLYILARVLHDWADGKCSHLLERIYHTCKPGGGILVIESLLDEDRRGPLLTQLYSLNMLVQTEGQERTPTHYHMLLSSAGFRDFQFKKTGAIYDAILARK.

Residues Tyr-147, Trp-164, Asp-210, 235–237 (GDF), and Arg-252 each bind S-adenosyl-L-methionine. Residue His-255 is the Proton donor/acceptor of the active site. The substrate site is built by Asp-256, Asn-302, and Gln-306.

It belongs to the class I-like SAM-binding methyltransferase superfamily. Cation-independent O-methyltransferase family. Homodimer. As to expression, expressed in the pineal gland (at protein level). In the retina, very low expression is found at the mRNA level, and not at the protein level.

It carries out the reaction N-acetylserotonin + S-adenosyl-L-methionine = melatonin + S-adenosyl-L-homocysteine + H(+). It functions in the pathway aromatic compound metabolism; melatonin biosynthesis; melatonin from serotonin: step 1/2. Functionally, catalyzes the transfer of a methyl group onto N-acetylserotonin, producing melatonin (N-acetyl-5-methoxytryptamine). Does not show Acetylserotonin O-methyltransferase activity. The sequence is that of Acetylserotonin O-methyltransferase (ASMT) from Homo sapiens (Human).